Here is a 273-residue protein sequence, read N- to C-terminus: Testis-specific serine/threonine-protein kinase 6 (273 aa).

The region spanning 12 to 267 is the Protein kinase domain; it reads YKLGRTIGEG…AGQVARNGWL (256 aa). ATP contacts are provided by residues 18-26 and Lys-41; that span reads IGEGSYSKV. Asp-135 (proton acceptor) is an active-site residue.

This sequence belongs to the protein kinase superfamily. CAMK Ser/Thr protein kinase family. Microtubule inner protein component of sperm flagellar doublet microtubules. Interacts with HSP90; this interaction stabilizes and activates TSSK6. Interacts with the heat shock proteins HSPCB, HSPA8 and HSPA1A. These interactions appear to be required for TSSK6 kinase activity. Interacts with TSACC; this interaction is direct and recruits TSACC to HSP90, which is essential for kinase activity. Mg(2+) serves as cofactor. Post-translationally, autophosphorylated. Ubiquitinated; HSP90 activity negatively regulates ubiquitination and degradation. Expressed in the testis, localized to the heads of elongating spermatids.

Its subcellular location is the cytoplasm. The protein resides in the cytoskeleton. It is found in the flagellum axoneme. The protein localises to the nucleus. The enzyme catalyses L-seryl-[protein] + ATP = O-phospho-L-seryl-[protein] + ADP + H(+). It carries out the reaction L-threonyl-[protein] + ATP = O-phospho-L-threonyl-[protein] + ADP + H(+). Functionally, serine/threonine-protein kinase component of the sperm flagellar doublet microtubules. May act as a regulator of sperm motility by mediating phosphorylation of sperm doublet microtubule proteins. Plays a role in DNA condensation during postmeiotic chromatin remodeling and histone-to-protamine transition during spermatogenesis. The chain is Testis-specific serine/threonine-protein kinase 6 from Mus musculus (Mouse).